A 173-amino-acid chain; its full sequence is Crossover junction endodeoxyribonuclease RuvC (173 aa).

Residues D8, E67, and D139 contribute to the active site. Mg(2+) contacts are provided by D8, E67, and D139.

The protein belongs to the RuvC family. Homodimer which binds Holliday junction (HJ) DNA. The HJ becomes 2-fold symmetrical on binding to RuvC with unstacked arms; it has a different conformation from HJ DNA in complex with RuvA. In the full resolvosome a probable DNA-RuvA(4)-RuvB(12)-RuvC(2) complex forms which resolves the HJ. Requires Mg(2+) as cofactor.

It localises to the cytoplasm. It catalyses the reaction Endonucleolytic cleavage at a junction such as a reciprocal single-stranded crossover between two homologous DNA duplexes (Holliday junction).. Its function is as follows. The RuvA-RuvB-RuvC complex processes Holliday junction (HJ) DNA during genetic recombination and DNA repair. Endonuclease that resolves HJ intermediates. Cleaves cruciform DNA by making single-stranded nicks across the HJ at symmetrical positions within the homologous arms, yielding a 5'-phosphate and a 3'-hydroxyl group; requires a central core of homology in the junction. The consensus cleavage sequence is 5'-(A/T)TT(C/G)-3'. Cleavage occurs on the 3'-side of the TT dinucleotide at the point of strand exchange. HJ branch migration catalyzed by RuvA-RuvB allows RuvC to scan DNA until it finds its consensus sequence, where it cleaves and resolves the cruciform DNA. The chain is Crossover junction endodeoxyribonuclease RuvC from Vibrio vulnificus (strain CMCP6).